We begin with the raw amino-acid sequence, 117 residues long: Ribosome-binding factor A (117 aa).

This sequence belongs to the RbfA family. Monomer. Binds 30S ribosomal subunits, but not 50S ribosomal subunits or 70S ribosomes.

It is found in the cytoplasm. Its function is as follows. One of several proteins that assist in the late maturation steps of the functional core of the 30S ribosomal subunit. Associates with free 30S ribosomal subunits (but not with 30S subunits that are part of 70S ribosomes or polysomes). Required for efficient processing of 16S rRNA. May interact with the 5'-terminal helix region of 16S rRNA. The sequence is that of Ribosome-binding factor A from Anaplasma marginale (strain St. Maries).